Here is a 691-residue protein sequence, read N- to C-terminus: CREB-regulated transcription coactivator 2 (691 aa).

Residues 1-20 (MATSGANGPGSATASASNPR) show a composition bias toward polar residues. The interval 1-30 (MATSGANGPGSATASASNPRKFSEKIALQK) is disordered. An N-acetylalanine modification is found at Ala2. Arg51 bears the Asymmetric dimethylarginine; by PRMT6 mark. Phosphoserine is present on residues Ser70, Ser86, and Ser90. 3 positions are modified to asymmetric dimethylarginine; by PRMT6: Arg99, Arg120, and Arg123. Ser136 is subject to Phosphoserine. Residues Arg161 and Arg168 each carry the asymmetric dimethylarginine; by PRMT6 modification. Thr169 carries the phosphothreonine modification. The residue at position 171 (Ser171) is a Phosphoserine; by AMPK, MARK2, SIK1 and SIK2. Residues 174–186 (ALHTSVMNPNPQD) are compositionally biased toward polar residues. The interval 174–195 (ALHTSVMNPNPQDTYPGPTPPS) is disordered. A Phosphothreonine modification is found at Thr192. Lys234 participates in a covalent cross-link: Glycyl lysine isopeptide (Lys-Gly) (interchain with G-Cter in SUMO2). A Nuclear export signal motif is present at residues 271-287 (TGGSLPDLTNLHFPPPL). Ser274 is modified (phosphoserine; by MARK2). Disordered regions lie at residues 280-306 (NLHFPPPLPTPLDPEETVYPSLSGGNS) and 335-491 (HSPL…YSPP). A phosphoserine mark is found at Ser306, Ser368, Ser393, Ser433, and Ser456. 2 stretches are compositionally biased toward low complexity: residues 335-383 (HSPL…HALP) and 390-411 (PSLSAPALSSSSSSSSTSSPVL). Residues 447–468 (SQQQLPKQFSPTMSPTLSSITQ) are compositionally biased toward polar residues. Tyr488 is subject to Phosphotyrosine. A phosphoserine mark is found at Ser489 and Ser492. The residue at position 501 (Thr501) is a Phosphothreonine. Residues 513–543 (CLVQPSGGQPPGRQPHYGTLYPPGSSGHGQQ) form a disordered region. Phosphoserine occurs at positions 611, 621, and 622.

Belongs to the TORC family. As to quaternary structure, binds, as a tetramer, through its N-terminal region, with the bZIP domain of CREB1. 'Arg-314' in the bZIP domain of CREB1 is essential for this interaction. Interaction, via its C-terminal, with TAF4, enhances recruitment of TAF4 to CREB1. Interacts with SIK2. Interacts with 14-3-3 proteins, YWHAB and YWHAG. Interacts (probably when phosphorylated at Ser-171) with YWHAE. Interacts with calmodulin-dependent catalytic subunit PPP3CA/calcineurin A. Interaction with COP1 mediates nuclear export and degradation of CRTC2. In terms of processing, phosphorylation/dephosphorylation states of Ser-171 are required for regulating transduction of CREB activity. CRTCs/TORCs are inactive when phosphorylated, and active when dephosphorylated at this site. This primary site of phosphorylation, is regulated by cAMP and calcium levels and is dependent on the phosphorylation of SIKs (SIK1 and SIK2) by LKB1. Following adenylyl cyclase activation, dephosphorylated at Ser-171 by PPP3CA/calcineurin A resulting in CRTC2 dissociation from 14-3-3 proteins and PPP3CA. Both insulin and AMPK increase this phosphorylation of CRTC2 while glucagon suppresses it. Phosphorylation at Ser-274 by MARK2 is induced under low glucose conditions and dephosphorylated in response to glucose influx. Phosphorylation at Ser-274 promotes interaction with 14-3-3 proteins and translocation to the cytoplasm. Asymmetric dimethylation of arginine resisues by PRMT6 enhances the association of CRTC2 with CREB on the promoters of gluconeogenic genes.

It localises to the cytoplasm. It is found in the nucleus. Its function is as follows. Transcriptional coactivator for CREB1 which activates transcription through both consensus and variant cAMP response element (CRE) sites. Acts as a coactivator, in the SIK/TORC signaling pathway, being active when dephosphorylated and acts independently of CREB1 'Ser-133' phosphorylation. Enhances the interaction of CREB1 with TAF4. Regulates gluconeogenesis as a component of the LKB1/AMPK/TORC2 signaling pathway. Regulates the expression of specific genes such as the steroidogenic gene, StAR. Potent coactivator of PPARGC1A and inducer of mitochondrial biogenesis in muscle cells. The polypeptide is CREB-regulated transcription coactivator 2 (Crtc2) (Rattus norvegicus (Rat)).